Here is a 329-residue protein sequence, read N- to C-terminus: 4-hydroxythreonine-4-phosphate dehydrogenase (329 aa).

Residues H136 and T137 each coordinate substrate. A divalent metal cation is bound by residues H166, H211, and H266. Substrate contacts are provided by K274, N283, and R292.

Belongs to the PdxA family. Homodimer. The cofactor is Zn(2+). Requires Mg(2+) as cofactor. It depends on Co(2+) as a cofactor.

It is found in the cytoplasm. It catalyses the reaction 4-(phosphooxy)-L-threonine + NAD(+) = 3-amino-2-oxopropyl phosphate + CO2 + NADH. It participates in cofactor biosynthesis; pyridoxine 5'-phosphate biosynthesis; pyridoxine 5'-phosphate from D-erythrose 4-phosphate: step 4/5. In terms of biological role, catalyzes the NAD(P)-dependent oxidation of 4-(phosphooxy)-L-threonine (HTP) into 2-amino-3-oxo-4-(phosphooxy)butyric acid which spontaneously decarboxylates to form 3-amino-2-oxopropyl phosphate (AHAP). This is 4-hydroxythreonine-4-phosphate dehydrogenase from Citrobacter koseri (strain ATCC BAA-895 / CDC 4225-83 / SGSC4696).